Reading from the N-terminus, the 336-residue chain is Urokinase plasminogen activator surface receptor (336 aa).

The N-terminal stretch at 1–23 (MGHPLLLPLLLLLLHTGVPASWG) is a signal peptide. 3 consecutive UPAR/Ly6 domains span residues 24-111 (LRCM…VTFP), 116-208 (LECI…LSLA), and 215-302 (HRCY…EDIQ). Disulfide bonds link Cys-26-Cys-47, Cys-29-Cys-35, and Cys-40-Cys-68. The N-linked (GlcNAc...) asparagine glycan is linked to Asn-75. Disulfide bonds link Cys-94/Cys-99, Cys-118/Cys-145, Cys-121/Cys-128, Cys-138/Cys-170, Cys-176/Cys-193, Cys-194/Cys-199, Cys-217/Cys-245, Cys-220/Cys-228, Cys-238/Cys-264, Cys-270/Cys-288, and Cys-289/Cys-294. 2 N-linked (GlcNAc...) asparagine glycosylation sites follow: Asn-195 and Asn-223.

In terms of assembly, monomer. Interacts (via the UPAR/Ly6 domains) with SRPX2. Interacts with MRC2. Interacts with FAP (seprase); the interaction occurs at the cell surface of invadopodia membrane. Interacts with SORL1 (via N-terminal ectodomain); this interaction decreases PLAUR internalization. The ternary complex composed of PLAUR-PLAU-SERPINE1 also interacts with SORL1.

It localises to the cell membrane. The protein resides in the cell projection. It is found in the invadopodium membrane. Functionally, acts as a receptor for urokinase plasminogen activator. Plays a role in localizing and promoting plasmin formation. Mediates the proteolysis-independent signal transduction activation effects of U-PA. It is subject to negative-feedback regulation by U-PA which cleaves it into an inactive form. The protein is Urokinase plasminogen activator surface receptor (PLAUR) of Aotus trivirgatus (Three-striped night monkey).